The chain runs to 553 residues: tRNA pseudouridine synthase 1 (553 aa).

Residues 1–78 are disordered; it reads MSEEQNLRPV…ETRSKDKDES (78 aa). Basic and acidic residues-rich tracts occupy residues 33 to 51 and 64 to 78; these read RKAD…KPND and SNEK…KDES. Asp158 acts as the Nucleophile in catalysis. A disordered region spans residues 517-539; the sequence is DLEQKAPSDPTPSDEKGKKPQRP.

The protein belongs to the tRNA pseudouridine synthase TruA family. Zn(2+) serves as cofactor.

The protein resides in the nucleus. The enzyme catalyses a uridine in tRNA = a pseudouridine in tRNA. The catalysed reaction is uridine in snRNA = pseudouridine in snRNA. It catalyses the reaction a uridine in mRNA = a pseudouridine in mRNA. In terms of biological role, formation of pseudouridine at positions 27 and 28 in the anticodon stem and loop of transfer RNAs; at positions 34 and 36 of intron-containing precursor tRNA(Ile) and at position 35 in the intron-containing tRNA(Tyr). Catalyzes pseudouridylation at position 44 in U2 snRNA. Also catalyzes pseudouridylation of mRNAs. In Kluyveromyces lactis (strain ATCC 8585 / CBS 2359 / DSM 70799 / NBRC 1267 / NRRL Y-1140 / WM37) (Yeast), this protein is tRNA pseudouridine synthase 1 (PUS1).